We begin with the raw amino-acid sequence, 119 residues long: Large ribosomal subunit protein bL20 (119 aa).

It belongs to the bacterial ribosomal protein bL20 family.

In terms of biological role, binds directly to 23S ribosomal RNA and is necessary for the in vitro assembly process of the 50S ribosomal subunit. It is not involved in the protein synthesizing functions of that subunit. In Streptococcus thermophilus (strain ATCC BAA-491 / LMD-9), this protein is Large ribosomal subunit protein bL20.